The sequence spans 246 residues: Probable transcriptional regulatory protein BVU_3469 (246 aa).

The protein belongs to the TACO1 family.

The protein resides in the cytoplasm. This chain is Probable transcriptional regulatory protein BVU_3469, found in Phocaeicola vulgatus (strain ATCC 8482 / DSM 1447 / JCM 5826 / CCUG 4940 / NBRC 14291 / NCTC 11154) (Bacteroides vulgatus).